Reading from the N-terminus, the 119-residue chain is DNA-binding protein inhibitor ID-3 (119 aa).

The 53-residue stretch at 28–80 folds into the bHLH domain; sequence RGKGPAAEEPLSLLDDMNHCYSRLRELVPGVPRGTQLSQVEILQRVIDYILDL.

In terms of assembly, homodimer, and heterodimer with other HLH proteins. Interacts with COPS5 and COPS7A. Interacts with IFI204. Interacts with GATA4 and NKX2-5. Interacts with ANKRD2; both proteins cooperate in myoblast differentiation. Interacts with CLOCK and BMAL1.

Its subcellular location is the nucleus. Transcriptional regulator (lacking a basic DNA binding domain) which negatively regulates the basic helix-loop-helix (bHLH) transcription factors by forming heterodimers and inhibiting their DNA binding and transcriptional activity. Implicated in regulating a variety of cellular processes, including cellular growth, senescence, differentiation, apoptosis, angiogenesis, and neoplastic transformation. Involved in myogenesis by inhibiting skeletal muscle and cardiac myocyte differentiation and promoting muscle precursor cells proliferation. Inhibits the binding of E2A-containing protein complexes to muscle creatine kinase E-box enhancer. Regulates the circadian clock by repressing the transcriptional activator activity of the CLOCK-BMAL1 heterodimer. In Canis lupus familiaris (Dog), this protein is DNA-binding protein inhibitor ID-3 (ID3).